The chain runs to 739 residues: MSSISLIQPDRDLFSWPQYWAACFGPAPFLPMSREEMDQLGWDSCDIILVTGDAYVDHPSFGMAICGRMLEAQGFRVGIIAQPDWSSKDDFMRLGKPNLFFGVTAGNMDSMINRYTADRRLRHDDAYTPDNVAGKRPDRATLVYTQRCKEAWKDVPVILGGIEASLRRTAHYDYWSDTVRRSVLVDSKADMLMFGNGERPLVEVAHRLAMGEPISEIRDVRNTAIIVKEALPGWSGVDSTRLDTLGKIDPIPHPYGEDLPCADNKPVAPKKQEAKAVIVQPPRQKPWEKTYVLLPSFEKVKGDKVLYAHASRILHHETNPGCARALMQKHGDRYVWINPPAIPLSTEEMDSVFALPYKRVPHPAYGNARIPAYEMIRFSVNIMRGCFGGCSFCSITEHEGRIIQSRSEDSIINEIEAIRDTVPGFTGVISDLGGPTANMYMLRCKSPRAEQTCRRLSCVYPDICPHMDTNHEPTINLYRRARDLKGIKKILIASGVRYDIAVEDPRYIKELATHHVGGYLKIAPEHTEEGPLSKMMKPGMGSYDRFKELFDTYSKQAGKEQYLIPYFISAHPGTRDEDMVNLALWLKKHRFRLDQVQNFYPSPLANSTTMYYTGKKPLAKIGYKSEGVFVPKGDKQRRLHKALLRYHDPANWPLIRQALEAMGKKHLIGSRRDCLVPAPTIEEMREARRQNRNTRPALTKHTPMATQRQTPATAKKASSTQSRPVNAGAKKRPKAAVGR.

The Radical SAM core domain occupies 372-650; sequence AYEMIRFSVN…KALLRYHDPA (279 aa). Residues cysteine 386, cysteine 390, and cysteine 393 each contribute to the [4Fe-4S] cluster site. The tract at residues 685 to 739 is disordered; that stretch reads REARRQNRNTRPALTKHTPMATQRQTPATAKKASSTQSRPVNAGAKKRPKAAVGR. Residues 704–724 are compositionally biased toward polar residues; the sequence is MATQRQTPATAKKASSTQSRP. Basic residues predominate over residues 729–739; sequence AKKRPKAAVGR.

The protein belongs to the UPF0313 family. [4Fe-4S] cluster serves as cofactor.

The sequence is that of UPF0313 protein YgiQ from Shigella flexneri.